We begin with the raw amino-acid sequence, 724 residues long: Phenylalanine ammonia-lyase (724 aa).

Catalysis depends on Tyr-99, which acts as the Proton donor/acceptor. Positions 204–206 (ASG) form a cross-link, 5-imidazolinone (Ala-Gly). At Ser-205 the chain carries 2,3-didehydroalanine (Ser). Residues Asn-265, Gln-355, Arg-361, Asn-391, Lys-462, Glu-490, and Asn-493 each contribute to the (E)-cinnamate site.

This sequence belongs to the PAL/histidase family. In terms of assembly, homotetramer. Post-translationally, contains an active site 4-methylidene-imidazol-5-one (MIO), which is formed autocatalytically by cyclization and dehydration of residues Ala-Ser-Gly.

The protein localises to the cytoplasm. The catalysed reaction is L-phenylalanine = (E)-cinnamate + NH4(+). The protein operates within phenylpropanoid metabolism; trans-cinnamate biosynthesis; trans-cinnamate from L-phenylalanine: step 1/1. Catalyzes the non-oxidative deamination of L-phenylalanine to form trans-cinnamic acid and a free ammonium ion. Facilitates the commitment step in phenylpropanoid pathways that produce secondary metabolites such as lignins, coumarins and flavonoids. The chain is Phenylalanine ammonia-lyase from Flammulina velutipes (Agaricus velutipes).